Reading from the N-terminus, the 419-residue chain is WD repeat-containing protein JIP5 (419 aa).

WD repeat units lie at residues 4–45 (ALSS…HNQS), 66–105 (PSHK…VKAR), 108–147 (RAHE…EGDA), 180–220 (DQED…KGVE), 224–263 (DQED…LDHA), 268–308 (GHPS…GIVG), and 351–390 (DAAE…QPPP). A disordered region spans residues 172 to 192 (DPPRSKKKDQEDDLKRKRDEE). Residues 372 to 408 (SADGSDESAGESDVMQPPPATKRRTAKSKAGKKSVHD) form a disordered region. Basic residues predominate over residues 392–404 (TKRRTAKSKAGKK).

It belongs to the WD repeat WDR55 family.

The protein resides in the nucleus. It is found in the nucleolus. In Malassezia globosa (strain ATCC MYA-4612 / CBS 7966) (Dandruff-associated fungus), this protein is WD repeat-containing protein JIP5 (JIP5).